Reading from the N-terminus, the 287-residue chain is ATP synthase gamma chain (287 aa).

Belongs to the ATPase gamma chain family. F-type ATPases have 2 components, CF(1) - the catalytic core - and CF(0) - the membrane proton channel. CF(1) has five subunits: alpha(3), beta(3), gamma(1), delta(1), epsilon(1). CF(0) has three main subunits: a, b and c.

It is found in the cell inner membrane. Produces ATP from ADP in the presence of a proton gradient across the membrane. The gamma chain is believed to be important in regulating ATPase activity and the flow of protons through the CF(0) complex. The polypeptide is ATP synthase gamma chain (Marinobacter nauticus (strain ATCC 700491 / DSM 11845 / VT8) (Marinobacter aquaeolei)).